A 304-amino-acid polypeptide reads, in one-letter code: Quinolinate synthase (304 aa).

2 residues coordinate iminosuccinate: histidine 24 and serine 41. A [4Fe-4S] cluster-binding site is contributed by cysteine 86. Iminosuccinate is bound by residues 112-114 and serine 129; that span reads YVN. Cysteine 171 is a binding site for [4Fe-4S] cluster. Residues 197–199 and threonine 214 each bind iminosuccinate; that span reads HPE. Position 259 (cysteine 259) interacts with [4Fe-4S] cluster.

It belongs to the quinolinate synthase family. Type 2 subfamily. The cofactor is [4Fe-4S] cluster.

It is found in the cytoplasm. The enzyme catalyses iminosuccinate + dihydroxyacetone phosphate = quinolinate + phosphate + 2 H2O + H(+). The protein operates within cofactor biosynthesis; NAD(+) biosynthesis; quinolinate from iminoaspartate: step 1/1. Functionally, catalyzes the condensation of iminoaspartate with dihydroxyacetone phosphate to form quinolinate. This Geobacter metallireducens (strain ATCC 53774 / DSM 7210 / GS-15) protein is Quinolinate synthase.